A 90-amino-acid chain; its full sequence is IVTLDGEDVIDCEPILGYLHRGMEKIAENRTIIQYLPYVTRWDYLATMFTEAITVNAPEFLENIQIPQRASYIRVIMLELSRIASHLLWL.

Belongs to the complex I 49 kDa subunit family. NDH is composed of at least 16 different subunits, 5 of which are encoded in the nucleus.

It is found in the plastid. Its subcellular location is the chloroplast thylakoid membrane. The catalysed reaction is a plastoquinone + NADH + (n+1) H(+)(in) = a plastoquinol + NAD(+) + n H(+)(out). It catalyses the reaction a plastoquinone + NADPH + (n+1) H(+)(in) = a plastoquinol + NADP(+) + n H(+)(out). NDH shuttles electrons from NAD(P)H:plastoquinone, via FMN and iron-sulfur (Fe-S) centers, to quinones in the photosynthetic chain and possibly in a chloroplast respiratory chain. The immediate electron acceptor for the enzyme in this species is believed to be plastoquinone. Couples the redox reaction to proton translocation, and thus conserves the redox energy in a proton gradient. This Secale cereale (Rye) protein is NAD(P)H-quinone oxidoreductase subunit H, chloroplastic (ndhH).